A 493-amino-acid polypeptide reads, in one-letter code: D-glyceraldehyde dehydrogenase (NADP(+)) (493 aa).

Residues 144–147, Arg-155, 170–174, 202–208, 223–246, Cys-279, and 379–381 contribute to the NADP(+) site; these read TPWN, KPSSD, KGSEIGD, GSTS…ILEL, and EIF. Residues Asn-147 and Arg-155 each contribute to the substrate site. Catalysis depends on Glu-245, which acts as the Proton acceptor. Position 279 (Cys-279) interacts with substrate. Cys-279 (proton donor) is an active-site residue.

The protein belongs to the aldehyde dehydrogenase family. Glyceraldehyde dehydrogenase subfamily. In terms of assembly, homotetramer. Dimer of dimers.

The enzyme catalyses D-glyceraldehyde + NADP(+) + H2O = (R)-glycerate + NADPH + 2 H(+). Its pathway is carbohydrate degradation; glycolysis. Its activity is regulated as follows. Stable for 2 hours at 60 degrees Celsius but activity is decreased to less than 50 percent within 15 minutes at 70 degrees Celsius. Functionally, NADP-dependent dehydrogenase of the nED (non-phosphorylated Entner-Doudoroff) pathway with highest activity towards glyceraldehydes (e.g. D,L-glyceraldehyde and D-glyceraldehyde), to a lesser extent towards D,L-glyceraldehyde-3-phosphate and glycolaldehyde, but no activity towards aliphatic or aromatic aldehydes. In Picrophilus torridus (strain ATCC 700027 / DSM 9790 / JCM 10055 / NBRC 100828 / KAW 2/3), this protein is D-glyceraldehyde dehydrogenase (NADP(+)).